The following is a 276-amino-acid chain: N-acetylmuramoyl-L-alanine amidase AmiD (276 aa).

The signal sequence occupies residues 1 to 16; the sequence is MRRFFWLVAAALLLAG. Cys17 is lipidated: N-palmitoyl cysteine. Cys17 carries the S-diacylglycerol cysteine lipid modification. Positions 42–179 constitute an N-acetylmuramoyl-L-alanine amidase domain; it reads PRIKVLVIHY…APQRKDDPGP (138 aa). Position 50 (His50) interacts with Zn(2+). Residue 51-52 participates in substrate binding; that stretch reads YT. Glu119 acts as the Proton acceptor in catalysis. His166 and Asp176 together coordinate Zn(2+).

The protein belongs to the N-acetylmuramoyl-L-alanine amidase 2 family. Requires Zn(2+) as cofactor.

The protein localises to the cell outer membrane. It carries out the reaction Hydrolyzes the link between N-acetylmuramoyl residues and L-amino acid residues in certain cell-wall glycopeptides.. The chain is N-acetylmuramoyl-L-alanine amidase AmiD (amiD) from Escherichia coli (strain K12).